Consider the following 349-residue polypeptide: Aldehyde reductase YahK (349 aa).

7 residues coordinate Zn(2+): cysteine 40, histidine 62, cysteine 93, cysteine 96, cysteine 99, cysteine 107, and cysteine 158.

The protein belongs to the zinc-containing alcohol dehydrogenase family. Zn(2+) is required as a cofactor.

It carries out the reaction a primary alcohol + NADP(+) = an aldehyde + NADPH + H(+). Its function is as follows. Catalyzes the reduction of a wide range of aldehydes into their corresponding alcohols. Has a strong preference for NADPH over NADH as the electron donor. Cannot use a ketone as substrate. Is a major source of NADPH-dependent aldehyde reductase activity in E.coli. The in vivo functions of YahK has yet to be determined. The chain is Aldehyde reductase YahK (yahK) from Escherichia coli (strain K12).